The primary structure comprises 258 residues: Trans-aconitate 2-methyltransferase (258 aa).

This sequence belongs to the methyltransferase superfamily. Tam family.

It localises to the cytoplasm. It catalyses the reaction trans-aconitate + S-adenosyl-L-methionine = (E)-3-(methoxycarbonyl)pent-2-enedioate + S-adenosyl-L-homocysteine. Functionally, catalyzes the S-adenosylmethionine monomethyl esterification of trans-aconitate. This chain is Trans-aconitate 2-methyltransferase, found in Deinococcus radiodurans (strain ATCC 13939 / DSM 20539 / JCM 16871 / CCUG 27074 / LMG 4051 / NBRC 15346 / NCIMB 9279 / VKM B-1422 / R1).